The primary structure comprises 96 residues: Co-chaperonin GroES (96 aa).

The protein belongs to the GroES chaperonin family. As to quaternary structure, heptamer of 7 subunits arranged in a ring. Interacts with the chaperonin GroEL.

Its subcellular location is the cytoplasm. Together with the chaperonin GroEL, plays an essential role in assisting protein folding. The GroEL-GroES system forms a nano-cage that allows encapsulation of the non-native substrate proteins and provides a physical environment optimized to promote and accelerate protein folding. GroES binds to the apical surface of the GroEL ring, thereby capping the opening of the GroEL channel. This is Co-chaperonin GroES from Holospora obtusa.